The primary structure comprises 203 residues: uncharacterized protein (203 aa).

Positions 1 to 23 (MKKIYKALISSLLLSTSINVAYA) are cleaved as a signal peptide. In terms of domain architecture, SH3b spans 24 to 87 (ETQYVTENLS…ILNSDLSSTP (64 aa)). The helical transmembrane segment at 167–189 (IAIQWFIYGGSVLGVGLLFGLLI) threads the bilayer.

To E.coli YgiM.

It localises to the membrane. This is an uncharacterized protein from Haemophilus influenzae (strain ATCC 51907 / DSM 11121 / KW20 / Rd).